A 387-amino-acid polypeptide reads, in one-letter code: EARP-interacting protein homolog (387 aa).

WD repeat units follow at residues 132-172, 182-222, 226-266, and 270-310; these read SAHG…AKAT, KGQL…QIYC, AHGQ…EPVK, and EHSH…SEPF. The segment at 309-337 is disordered; sequence PFGHLVDDDDLSDPEENQQEDKGKEPLQD. Positions 315–326 are enriched in acidic residues; sequence DDDDLSDPEENQ. Residues 345-385 form a WD 5 repeat; sequence EHEDSVYAVEWSAADPWLFASLSYDGRLVINRVPRALKYRI.

The protein belongs to the WD repeat EIPR1 family.

It localises to the golgi apparatus. The protein localises to the trans-Golgi network. In terms of biological role, may act as a component of endosomal retrieval machinery that is involved in protein transport from early endosomes to either recycling endosomes or the trans-Golgi network. This Danio rerio (Zebrafish) protein is EARP-interacting protein homolog.